The following is a 127-amino-acid chain: Ribosome-binding factor A (127 aa).

This sequence belongs to the RbfA family. As to quaternary structure, monomer. Binds 30S ribosomal subunits, but not 50S ribosomal subunits or 70S ribosomes.

Its subcellular location is the cytoplasm. Functionally, one of several proteins that assist in the late maturation steps of the functional core of the 30S ribosomal subunit. Associates with free 30S ribosomal subunits (but not with 30S subunits that are part of 70S ribosomes or polysomes). Required for efficient processing of 16S rRNA. May interact with the 5'-terminal helix region of 16S rRNA. The protein is Ribosome-binding factor A of Aromatoleum aromaticum (strain DSM 19018 / LMG 30748 / EbN1) (Azoarcus sp. (strain EbN1)).